The following is a 186-amino-acid chain: ATP-dependent protease subunit HslV (186 aa).

Threonine 14 is an active-site residue. Positions 168, 171, and 174 each coordinate Na(+).

It belongs to the peptidase T1B family. HslV subfamily. In terms of assembly, a double ring-shaped homohexamer of HslV is capped on each side by a ring-shaped HslU homohexamer. The assembly of the HslU/HslV complex is dependent on binding of ATP.

The protein localises to the cytoplasm. It catalyses the reaction ATP-dependent cleavage of peptide bonds with broad specificity.. Its activity is regulated as follows. Allosterically activated by HslU binding. In terms of biological role, protease subunit of a proteasome-like degradation complex believed to be a general protein degrading machinery. In Methylorubrum extorquens (strain CM4 / NCIMB 13688) (Methylobacterium extorquens), this protein is ATP-dependent protease subunit HslV.